Reading from the N-terminus, the 80-residue chain is Acyl carrier protein (80 aa).

A Carrier domain is found at 4–79 (EEIFNKIKDL…DAVSYIKSHQ (76 aa)). Position 39 is an O-(pantetheine 4'-phosphoryl)serine (serine 39).

The protein belongs to the acyl carrier protein (ACP) family. 4'-phosphopantetheine is transferred from CoA to a specific serine of apo-ACP by AcpS. This modification is essential for activity because fatty acids are bound in thioester linkage to the sulfhydryl of the prosthetic group.

The protein localises to the cytoplasm. Its pathway is lipid metabolism; fatty acid biosynthesis. Its function is as follows. Carrier of the growing fatty acid chain in fatty acid biosynthesis. This chain is Acyl carrier protein, found in Lactobacillus acidophilus (strain ATCC 700396 / NCK56 / N2 / NCFM).